We begin with the raw amino-acid sequence, 51 residues long: MSAHKTFIIKRKLAKKLKQNRPIPQWVRMRTGNTIRYNAKRRHWRRTKLKL.

Belongs to the eukaryotic ribosomal protein eL39 family.

The polypeptide is Large ribosomal subunit protein eL39 (RpL39) (Plutella xylostella (Diamondback moth)).